Reading from the N-terminus, the 264-residue chain is 3-methyl-2-oxobutanoate hydroxymethyltransferase (264 aa).

Asp-45 and Asp-84 together coordinate Mg(2+). Residues 45–46, Asp-84, and Lys-113 contribute to the 3-methyl-2-oxobutanoate site; that span reads DS. Glu-115 contacts Mg(2+). The active-site Proton acceptor is the Glu-182.

The protein belongs to the PanB family. As to quaternary structure, homodecamer; pentamer of dimers. The cofactor is Mg(2+).

It localises to the cytoplasm. It carries out the reaction 3-methyl-2-oxobutanoate + (6R)-5,10-methylene-5,6,7,8-tetrahydrofolate + H2O = 2-dehydropantoate + (6S)-5,6,7,8-tetrahydrofolate. The protein operates within cofactor biosynthesis; (R)-pantothenate biosynthesis; (R)-pantoate from 3-methyl-2-oxobutanoate: step 1/2. Catalyzes the reversible reaction in which hydroxymethyl group from 5,10-methylenetetrahydrofolate is transferred onto alpha-ketoisovalerate to form ketopantoate. This Caldicellulosiruptor bescii (strain ATCC BAA-1888 / DSM 6725 / KCTC 15123 / Z-1320) (Anaerocellum thermophilum) protein is 3-methyl-2-oxobutanoate hydroxymethyltransferase.